The sequence spans 181 residues: MDDLTAQALKDFTARYCDAWHEEHKSWPLSEELYGVPSPCIISTTEDAVYWQPQPFTGEQNVNAVERAFDIVIQSTIHTFYTTQFAGDMHAQFGDIKLTLLQTWSEDDFRRVQENLIGHLVTQKRLKLPPTLFIATLEEELEVISVCNLSGEVCKETLGTRKRTHLASNLAEFLNQLKPLL.

It belongs to the Syd family.

The protein localises to the cell inner membrane. Interacts with the SecY protein in vivo. May bind preferentially to an uncomplexed state of SecY, thus functioning either as a chelating agent for excess SecY in the cell or as a regulatory factor that negatively controls the translocase function. In Shigella flexneri serotype 5b (strain 8401), this protein is Protein Syd.